Reading from the N-terminus, the 294-residue chain is Ribosomal protein L11 methyltransferase (294 aa).

Residues threonine 144, glycine 165, aspartate 187, and asparagine 229 each coordinate S-adenosyl-L-methionine.

It belongs to the methyltransferase superfamily. PrmA family.

The protein localises to the cytoplasm. The enzyme catalyses L-lysyl-[protein] + 3 S-adenosyl-L-methionine = N(6),N(6),N(6)-trimethyl-L-lysyl-[protein] + 3 S-adenosyl-L-homocysteine + 3 H(+). Methylates ribosomal protein L11. The polypeptide is Ribosomal protein L11 methyltransferase (Pseudomonas paraeruginosa (strain DSM 24068 / PA7) (Pseudomonas aeruginosa (strain PA7))).